The following is a 507-amino-acid chain: ATP synthase subunit alpha, plastid (507 aa).

Residue 170–177 (GDRQTGKT) coordinates ATP.

This sequence belongs to the ATPase alpha/beta chains family. F-type ATPases have 2 components, CF(1) - the catalytic core - and CF(0) - the membrane proton channel. CF(1) has five subunits: alpha(3), beta(3), gamma(1), delta(1), epsilon(1). CF(0) has four main subunits: a, b, b' and c.

The protein resides in the plastid membrane. The catalysed reaction is ATP + H2O + 4 H(+)(in) = ADP + phosphate + 5 H(+)(out). Its function is as follows. Produces ATP from ADP in the presence of a proton gradient across the membrane. The alpha chain is a regulatory subunit. The sequence is that of ATP synthase subunit alpha, plastid from Cuscuta gronovii (Common dodder).